A 333-amino-acid polypeptide reads, in one-letter code: 4-hydroxy-3-methylbut-2-enyl diphosphate reductase (333 aa).

Cys20 contacts [4Fe-4S] cluster. 2 residues coordinate (2E)-4-hydroxy-3-methylbut-2-enyl diphosphate: His49 and His82. Dimethylallyl diphosphate contacts are provided by His49 and His82. 2 residues coordinate isopentenyl diphosphate: His49 and His82. Cys104 serves as a coordination point for [4Fe-4S] cluster. His132 serves as a coordination point for (2E)-4-hydroxy-3-methylbut-2-enyl diphosphate. His132 provides a ligand contact to dimethylallyl diphosphate. Residue His132 participates in isopentenyl diphosphate binding. Glu134 (proton donor) is an active-site residue. (2E)-4-hydroxy-3-methylbut-2-enyl diphosphate is bound at residue Thr172. Cys202 lines the [4Fe-4S] cluster pocket. (2E)-4-hydroxy-3-methylbut-2-enyl diphosphate contacts are provided by Ser230, Ser231, Asn232, and Ser274. Residues Ser230, Ser231, Asn232, and Ser274 each coordinate dimethylallyl diphosphate. Isopentenyl diphosphate-binding residues include Ser230, Ser231, Asn232, and Ser274.

This sequence belongs to the IspH family. [4Fe-4S] cluster serves as cofactor.

It catalyses the reaction isopentenyl diphosphate + 2 oxidized [2Fe-2S]-[ferredoxin] + H2O = (2E)-4-hydroxy-3-methylbut-2-enyl diphosphate + 2 reduced [2Fe-2S]-[ferredoxin] + 2 H(+). It carries out the reaction dimethylallyl diphosphate + 2 oxidized [2Fe-2S]-[ferredoxin] + H2O = (2E)-4-hydroxy-3-methylbut-2-enyl diphosphate + 2 reduced [2Fe-2S]-[ferredoxin] + 2 H(+). Its pathway is isoprenoid biosynthesis; dimethylallyl diphosphate biosynthesis; dimethylallyl diphosphate from (2E)-4-hydroxy-3-methylbutenyl diphosphate: step 1/1. The protein operates within isoprenoid biosynthesis; isopentenyl diphosphate biosynthesis via DXP pathway; isopentenyl diphosphate from 1-deoxy-D-xylulose 5-phosphate: step 6/6. Its function is as follows. Catalyzes the conversion of 1-hydroxy-2-methyl-2-(E)-butenyl 4-diphosphate (HMBPP) into a mixture of isopentenyl diphosphate (IPP) and dimethylallyl diphosphate (DMAPP). Acts in the terminal step of the DOXP/MEP pathway for isoprenoid precursor biosynthesis. The polypeptide is 4-hydroxy-3-methylbut-2-enyl diphosphate reductase (Polaromonas sp. (strain JS666 / ATCC BAA-500)).